Here is a 444-residue protein sequence, read N- to C-terminus: Ribulose bisphosphate carboxylase (444 aa).

Lysine 163 functions as the Proton acceptor in the catalytic mechanism. Substrate is bound at residue lysine 165. Residues lysine 189, aspartate 191, and glutamate 192 each contribute to the Mg(2+) site. Residue lysine 189 is modified to N6-carboxylysine. Histidine 281 acts as the Proton acceptor in catalysis. Substrate-binding positions include arginine 282, histidine 314, 367-369 (SGG), and 389-392 (QLGG).

This sequence belongs to the RuBisCO large chain family. Type III subfamily. As to quaternary structure, homodecamer, consisting of five dimer units which form a ring-like pentagonal structure. This arrangement is essential for its high thermostability. In contrast to form I RuBisCO, the form III RuBisCO is composed solely of large subunits. The cofactor is Mg(2+).

It carries out the reaction 2 (2R)-3-phosphoglycerate + 2 H(+) = D-ribulose 1,5-bisphosphate + CO2 + H2O. The catalysed reaction is D-ribulose 1,5-bisphosphate + O2 = 2-phosphoglycolate + (2R)-3-phosphoglycerate + 2 H(+). Catalyzes the addition of molecular CO(2) and H(2)O to ribulose 1,5-bisphosphate (RuBP), generating two molecules of 3-phosphoglycerate (3-PGA). Functions in an archaeal AMP degradation pathway, together with AMP phosphorylase and R15P isomerase. This chain is Ribulose bisphosphate carboxylase, found in Thermococcus kodakarensis (strain ATCC BAA-918 / JCM 12380 / KOD1) (Pyrococcus kodakaraensis (strain KOD1)).